Consider the following 274-residue polypeptide: Rhamnulose-1-phosphate aldolase (274 aa).

E117 is a catalytic residue. The Zn(2+) site is built by H141, H143, and H212.

It belongs to the aldolase class II family. RhaD subfamily. Homotetramer. Zn(2+) is required as a cofactor.

The protein localises to the cytoplasm. It catalyses the reaction L-rhamnulose 1-phosphate = (S)-lactaldehyde + dihydroxyacetone phosphate. It functions in the pathway carbohydrate degradation; L-rhamnose degradation; glycerone phosphate from L-rhamnose: step 3/3. Catalyzes the reversible cleavage of L-rhamnulose-1-phosphate to dihydroxyacetone phosphate (DHAP) and L-lactaldehyde. The sequence is that of Rhamnulose-1-phosphate aldolase from Pectobacterium carotovorum subsp. carotovorum (strain PC1).